A 326-amino-acid polypeptide reads, in one-letter code: Flotillin-like protein FloA (326 aa).

Residues 3–23 (FTTIVVILLVIACIVVLFFIG) traverse the membrane as a helical segment.

The protein belongs to the flotillin-like FloA family. Homooligomerizes.

It localises to the cell membrane. The protein resides in the membrane raft. Its function is as follows. Found in functional membrane microdomains (FMM) that may be equivalent to eukaryotic membrane rafts. FMMs are highly dynamic and increase in number as cells age. Flotillins are thought to be important factors in membrane fluidity. This chain is Flotillin-like protein FloA, found in Desulforapulum autotrophicum (strain ATCC 43914 / DSM 3382 / VKM B-1955 / HRM2) (Desulfobacterium autotrophicum).